Consider the following 92-residue polypeptide: Small ribosomal subunit protein uS19c (92 aa).

Belongs to the universal ribosomal protein uS19 family.

It is found in the plastid. It localises to the chloroplast. In terms of biological role, protein S19 forms a complex with S13 that binds strongly to the 16S ribosomal RNA. The sequence is that of Small ribosomal subunit protein uS19c from Morus indica (Mulberry).